We begin with the raw amino-acid sequence, 482 residues long: Cysteine--tRNA ligase (482 aa).

Cysteine 29 provides a ligand contact to Zn(2+). The short motif at 31–41 is the 'HIGH' region element; the sequence is VTVYDYCHLGH. The Zn(2+) site is built by cysteine 213, histidine 238, and glutamate 242. The 'KMSKS' region signature appears at 275–279; the sequence is KMSKS. An ATP-binding site is contributed by lysine 278.

Belongs to the class-I aminoacyl-tRNA synthetase family. As to quaternary structure, monomer. The cofactor is Zn(2+).

It is found in the cytoplasm. The enzyme catalyses tRNA(Cys) + L-cysteine + ATP = L-cysteinyl-tRNA(Cys) + AMP + diphosphate. The chain is Cysteine--tRNA ligase from Gloeobacter violaceus (strain ATCC 29082 / PCC 7421).